The primary structure comprises 493 residues: MLLFEQPVDLEKNNEDDTNIKPFAISRHFLLKLLLCGIILIELLLYSKCPKPIDNGPRTIANRSNTYFNGTHDFKTLTILISIDGFHPRLIDAKYTPFLYNLHNLRSPYDMNITTAPYMIPSFPTQTFPNHWSMVTGKYPIEHGIVSNIFWDNFTSSEFRPNNLDARIWSNTADPIWQLLQTESQGEYKVATHMWPGSEVVYEDHGDVPRERMPFYFGKFNQWEKLQDKLAQIFRYIDMPQLKDRPELVISYIPNVDSYGHSFGYDLRDKRLQKLIGEVDGFFLDLIEGLQKRNLLKISNVMIVSDHGMSNVNANDGEHVVVWERVFPADAMSAFISHLYNEGPMMMVCLKNPRDKQWICDLIEAQLEKAYGDEISRKFHVILKEDFDPSWKYFQYDNRKHRYDDRVGDIWILADEYYAIVKEMGDVPIGIMGTHGYNFNNCSDMASIFIGMGPMFNNEVVPPFENIEVYNMLIKASALLGEEKTKKEKSLLQ.

Over 1–28 the chain is Cytoplasmic; that stretch reads MLLFEQPVDLEKNNEDDTNIKPFAISRH. The chain crosses the membrane as a helical; Signal-anchor for type II membrane protein span at residues 29-45; the sequence is FLLKLLLCGIILIELLL. Topologically, residues 46–493 are extracellular; the sequence is YSKCPKPIDN…KTKKEKSLLQ (448 aa). N-linked (GlcNAc...) asparagine glycosylation is found at Asn62, Asn69, and Asn112. The interval 76–438 is phosphodiesterase; the sequence is TLTILISIDG…IGIMGTHGYN (363 aa). Thr127 functions as the Nucleophile in the catalytic mechanism. Residues Asn153 and Asn441 are each glycosylated (N-linked (GlcNAc...) asparagine).

This sequence belongs to the nucleotide pyrophosphatase/phosphodiesterase family. Autophosphorylated as part of the catalytic cycle of phosphodiesterase/pyrophosphatase activity.

Its subcellular location is the membrane. It catalyses the reaction Hydrolytically removes 5'-nucleotides successively from the 3'-hydroxy termini of 3'-hydroxy-terminated oligonucleotides.. The enzyme catalyses a ribonucleoside 5'-triphosphate + H2O = a ribonucleoside 5'-phosphate + diphosphate + H(+). The catalysed reaction is a 2'-deoxyribonucleoside 5'-triphosphate + H2O = a 2'-deoxyribonucleoside 5'-phosphate + diphosphate + H(+). In terms of biological role, mediates extracellular nucleotide derived phosphate hydrolysis along with NPP1 and PHO5. The chain is Ectonucleotide pyrophosphatase/phosphodiesterase 2 (NPP2) from Saccharomyces cerevisiae (strain ATCC 204508 / S288c) (Baker's yeast).